A 310-amino-acid polypeptide reads, in one-letter code: Proline dehydrogenase (310 aa).

Residue Lys-98 participates in substrate binding. Residue Asp-135 is part of the active site. FAD contacts are provided by residues Met-136, Gln-166, 187–192 (RMVKGA), 229–230 (TH), and 292–295 (RIAE). Arg-187 is a catalytic residue. 291–292 (RR) serves as a coordination point for substrate.

It belongs to the proline dehydrogenase family. The cofactor is FAD.

It carries out the reaction L-proline + a quinone = (S)-1-pyrroline-5-carboxylate + a quinol + H(+). The protein operates within amino-acid degradation; L-proline degradation into L-glutamate; L-glutamate from L-proline: step 1/2. In terms of biological role, converts proline to delta-1-pyrroline-5-carboxylate. The polypeptide is Proline dehydrogenase (Deinococcus radiodurans (strain ATCC 13939 / DSM 20539 / JCM 16871 / CCUG 27074 / LMG 4051 / NBRC 15346 / NCIMB 9279 / VKM B-1422 / R1)).